Consider the following 314-residue polypeptide: Olfactory receptor 1E1 (314 aa).

At 1-25 (MMGQNQTSISDFLLLGLPIQPEQQN) the chain is on the extracellular side. N-linked (GlcNAc...) asparagine glycosylation is present at asparagine 5. Residues 26–49 (LCYALFLAMYLTTLLGNLLIIVLI) traverse the membrane as a helical segment. Topologically, residues 50 to 57 (RLDSHLHT) are cytoplasmic. Residues 58–79 (PMYLFLSNLSFSDLCFSSVTIP) form a helical membrane-spanning segment. Residues 80–100 (KLLQNMQNQDPSIPYADCLTQ) are Extracellular-facing. Cysteine 97 and cysteine 189 are disulfide-bonded. A helical membrane pass occupies residues 101–120 (MYFFLLFGDLESFLLVAMAY). Topologically, residues 121–139 (DRYVAICFPLHYTAIMSPM) are cytoplasmic. A helical membrane pass occupies residues 140-158 (LCLSVVALSWVLTTFHAML). Residues 159 to 195 (HTLLMARLCFCADNVIPHFFCDMSALLKLACSDTRVN) are Extracellular-facing. A helical membrane pass occupies residues 196-219 (EWVIFIMGGLILVIPFLLILGSYA). At 220–236 (RIVSSILKVPSSKGICK) the chain is on the cytoplasmic side. Residues 237–259 (ALSTCGSHLSVVSLFYGTVIGLY) traverse the membrane as a helical segment. Residues 260-272 (LCPSANSSTLKDT) are Extracellular-facing. The helical transmembrane segment at 273–292 (VMAMIYTVVTPMLNPFIYSL) threads the bilayer. Residues 293 to 314 (RNRDMKGALSRVIHQKKTFFSL) are Cytoplasmic-facing.

It belongs to the G-protein coupled receptor 1 family.

It is found in the cell membrane. Odorant receptor. The protein is Olfactory receptor 1E1 (OR1E1) of Pan troglodytes (Chimpanzee).